A 348-amino-acid polypeptide reads, in one-letter code: Phosphoribosylformylglycinamidine cyclo-ligase (348 aa).

It belongs to the AIR synthase family.

The protein localises to the cytoplasm. It carries out the reaction 2-formamido-N(1)-(5-O-phospho-beta-D-ribosyl)acetamidine + ATP = 5-amino-1-(5-phospho-beta-D-ribosyl)imidazole + ADP + phosphate + H(+). Its pathway is purine metabolism; IMP biosynthesis via de novo pathway; 5-amino-1-(5-phospho-D-ribosyl)imidazole from N(2)-formyl-N(1)-(5-phospho-D-ribosyl)glycinamide: step 2/2. The polypeptide is Phosphoribosylformylglycinamidine cyclo-ligase (Geobacter sulfurreducens (strain ATCC 51573 / DSM 12127 / PCA)).